Reading from the N-terminus, the 335-residue chain is DNA-directed RNA polymerase subunit alpha (335 aa).

An alpha N-terminal domain (alpha-NTD) region spans residues 1–233 (MTRTANEFLT…QQIAIFVDLQ (233 aa)). The segment at 247 to 335 (VDPILLRPVD…MDDRFAYRSR (89 aa)) is alpha C-terminal domain (alpha-CTD).

This sequence belongs to the RNA polymerase alpha chain family. As to quaternary structure, homodimer. The RNAP catalytic core consists of 2 alpha, 1 beta, 1 beta' and 1 omega subunit. When a sigma factor is associated with the core the holoenzyme is formed, which can initiate transcription.

It catalyses the reaction RNA(n) + a ribonucleoside 5'-triphosphate = RNA(n+1) + diphosphate. Its function is as follows. DNA-dependent RNA polymerase catalyzes the transcription of DNA into RNA using the four ribonucleoside triphosphates as substrates. In Acinetobacter baylyi (strain ATCC 33305 / BD413 / ADP1), this protein is DNA-directed RNA polymerase subunit alpha.